Reading from the N-terminus, the 245-residue chain is MRLIMNADDFGISKAINLGIIEGFKNGIVTSTTLMCNMETTEHAVNLAKENSKLGVGIHLVLTAGRPLSKNVKTLVDNEGNFLKYDKMVESACIEDIRIEFRNQFEKFLSFGIVPTHIDTHHHVHSIESVFEVVAELAKEHNIPIRHIKAIGEEKYENIKTTTEFIDSFYNLSMIEPQMLINLLDDNMNVDSLEIMCHPGYLDSKILSSSSYAYPRVKELETLTNKEVIQFINEKNIELINFKDI.

Residues H59 and H121 each coordinate Mg(2+).

This sequence belongs to the YdjC deacetylase family. As to quaternary structure, homodimer. It depends on Mg(2+) as a cofactor.

In terms of biological role, probably catalyzes the deacetylation of acetylated carbohydrates an important step in the degradation of oligosaccharides. This chain is Carbohydrate deacetylase, found in Clostridium beijerinckii (strain ATCC 51743 / NCIMB 8052) (Clostridium acetobutylicum).